We begin with the raw amino-acid sequence, 54 residues long: uncharacterized protein (54 aa).

Residues 1 to 54 form a disordered region; it reads MSKKSTPMTKDAASRIQSSAAKSGGDVSSGSFASRAQSAAAINANNTSNSTGKK. Low complexity predominate over residues 28–54; it reads SSGSFASRAQSAAAINANNTSNSTGKK.

This is an uncharacterized protein from Dictyostelium discoideum (Social amoeba).